A 192-amino-acid polypeptide reads, in one-letter code: Fe/S biogenesis protein NfuA (192 aa).

Residues Cys149 and Cys152 each contribute to the [4Fe-4S] cluster site.

The protein belongs to the NfuA family. As to quaternary structure, homodimer. It depends on [4Fe-4S] cluster as a cofactor.

Functionally, involved in iron-sulfur cluster biogenesis. Binds a 4Fe-4S cluster, can transfer this cluster to apoproteins, and thereby intervenes in the maturation of Fe/S proteins. Could also act as a scaffold/chaperone for damaged Fe/S proteins. In Shewanella halifaxensis (strain HAW-EB4), this protein is Fe/S biogenesis protein NfuA.